Consider the following 418-residue polypeptide: Elongation factor Tu, chloroplastic (418 aa).

Residues 10-214 form the tr-type G domain; it reads KPHVNIGTIG…NVDSYIPTPQ (205 aa). Residues 19-26 are G1; the sequence is GHVDHGKT. 19–26 contacts GTP; that stretch reads GHVDHGKT. Mg(2+) is bound at residue Thr-26. A G2 region spans residues 60 to 64; the sequence is GITIN. The interval 81 to 84 is G3; that stretch reads DCPG. GTP is bound by residues 81–85 and 136–139; these read DCPGH and NKED. The G4 stretch occupies residues 136–139; that stretch reads NKED. The segment at 174–176 is G5; sequence SAL.

It belongs to the TRAFAC class translation factor GTPase superfamily. Classic translation factor GTPase family. EF-Tu/EF-1A subfamily.

It is found in the plastid. The protein localises to the chloroplast. The enzyme catalyses GTP + H2O = GDP + phosphate + H(+). Functionally, GTP hydrolase that promotes the GTP-dependent binding of aminoacyl-tRNA to the A-site of ribosomes during protein biosynthesis. The chain is Elongation factor Tu, chloroplastic (tufA) from Chlamydomonas reinhardtii (Chlamydomonas smithii).